Reading from the N-terminus, the 459-residue chain is MAFLPPNLKIMFNPRHPPPFLPPPPPSNLPPYTGLRDYLSIFTDPSNEEPFKKEHIENLEEKREKKRKLKISENDERISKSLKAWDPYSNSETTGDPYKTIFVSRISYKTTQQKLEFEFGQFGPIKSLFLVKDSNNPEKHTGYAFIEFERERDMKAAYKQADGMKIDDRRIVVDIERGRVIKNWKPRKFGGGLGNTRAGGVDVNQTFSGREMSESREKEKEREKEKEKEKERMEKMKKRDGGLSSNGNRSNGISSGSGGSGGDRGDRGDRDRGDRGDRSDRSDRDRERGRGDRDHRGSGGERERERDQRDRGGDRGGDRGDRSDRGRSDRGDRGDRSDRGRDDRERGRDDRGDRGRDDRRGGSDRDRDRGSRDDRGDRDDRSDRGRDDRRGGSDRDHRIDERRRDQRDYGSISDAHFDHFQYQPQQHHHHQQNHQSHHNQPHPERVNRDYSMISNENGF.

The 80-residue stretch at 99-178 (KTIFVSRISY…RRIVVDIERG (80 aa)) folds into the RRM domain. The tract at residues 185-459 (KPRKFGGGLG…YSMISNENGF (275 aa)) is disordered. A compositionally biased stretch (basic and acidic residues) spans 211 to 241 (EMSESREKEKEREKEKEKEKERMEKMKKRDG). Over residues 242 to 254 (GLSSNGNRSNGIS) the composition is skewed to low complexity. A compositionally biased stretch (basic and acidic residues) spans 263-408 (DRGDRGDRDR…IDERRRDQRD (146 aa)). The segment covering 426–440 (QHHHHQQNHQSHHNQ) has biased composition (basic residues).

It localises to the nucleus. In terms of biological role, mediates the splicing of pre-mRNA by binding to the stem loop I region of U1-snRNA. In Dictyostelium discoideum (Social amoeba), this protein is U1 small nuclear ribonucleoprotein 70 kDa (snrnp70).